Consider the following 451-residue polypeptide: Phosphoglucosamine mutase (451 aa).

Residue serine 107 is the Phosphoserine intermediate of the active site. Mg(2+) is bound by residues serine 107, aspartate 246, aspartate 248, and aspartate 250. Serine 107 bears the Phosphoserine mark.

It belongs to the phosphohexose mutase family. Mg(2+) is required as a cofactor. Post-translationally, activated by phosphorylation.

The enzyme catalyses alpha-D-glucosamine 1-phosphate = D-glucosamine 6-phosphate. Functionally, catalyzes the conversion of glucosamine-6-phosphate to glucosamine-1-phosphate. The protein is Phosphoglucosamine mutase of Burkholderia cenocepacia (strain HI2424).